Consider the following 104-residue polypeptide: Pyrimidine/purine nucleoside phosphorylase (104 aa).

The protein belongs to the nucleoside phosphorylase PpnP family.

The enzyme catalyses a purine D-ribonucleoside + phosphate = a purine nucleobase + alpha-D-ribose 1-phosphate. It catalyses the reaction adenosine + phosphate = alpha-D-ribose 1-phosphate + adenine. The catalysed reaction is cytidine + phosphate = cytosine + alpha-D-ribose 1-phosphate. It carries out the reaction guanosine + phosphate = alpha-D-ribose 1-phosphate + guanine. The enzyme catalyses inosine + phosphate = alpha-D-ribose 1-phosphate + hypoxanthine. It catalyses the reaction thymidine + phosphate = 2-deoxy-alpha-D-ribose 1-phosphate + thymine. The catalysed reaction is uridine + phosphate = alpha-D-ribose 1-phosphate + uracil. It carries out the reaction xanthosine + phosphate = alpha-D-ribose 1-phosphate + xanthine. Its function is as follows. Catalyzes the phosphorolysis of diverse nucleosides, yielding D-ribose 1-phosphate and the respective free bases. Can use uridine, adenosine, guanosine, cytidine, thymidine, inosine and xanthosine as substrates. Also catalyzes the reverse reactions. The protein is Pyrimidine/purine nucleoside phosphorylase of Trichlorobacter lovleyi (strain ATCC BAA-1151 / DSM 17278 / SZ) (Geobacter lovleyi).